The sequence spans 455 residues: SUN domain-containing protein 2 (455 aa).

Over residues methionine 1–proline 12 the composition is skewed to polar residues. The segment at methionine 1–isoleucine 99 is disordered. Serine 2 carries the N-acetylserine modification. Residues serine 2–lysine 105 are Nuclear-facing. Serine 63 bears the Phosphoserine mark. Over residues lysine 74–glutamine 88 the composition is skewed to low complexity. The Nuclear localization signal signature appears at glutamine 88–glutamine 95. Residues threonine 106–isoleucine 128 form a helical membrane-spanning segment. Residues arginine 129 to alanine 455 lie on the Perinuclear space side of the membrane. Residues leucine 201–lysine 225 adopt a coiled-coil conformation. Positions glycine 285–leucine 447 constitute an SUN domain.

Forms homomers (e.g. dimers, trimers and tetramers) and heteromers with SUN1. Interacts with SUN3, SUN4 and TIK. Core component of the LINC complex which is composed of inner nuclear membrane SUN domain-containing proteins coupled to outer nuclear membrane WIP and WIT proteins. The LINC complex also involves nucleoskeletal proteins CRWN/LINC and possibly KAKU4 and the cytoskeletal myosin KAKU1. Interacts with LINC1, WIP1, WIP2 and WIP3 at the nuclear envelope (NE). Interacts with SINE1, SINE2, SINE3 and SINE4. Interacts with NEAP1, NEA2 and NEAP3. In terms of tissue distribution, expressed in roots, hypocotyls, cotyledons and leaves and inflorescences.

It localises to the nucleus inner membrane. Its subcellular location is the cytoplasm. The protein resides in the cytoskeleton. It is found in the phragmoplast. The protein localises to the endoplasmic reticulum membrane. It localises to the nucleus envelope. Its function is as follows. Component of SUN-protein-containing multivariate complexes also called LINC complexes which link the nucleoskeleton and cytoskeleton by providing versatile outer nuclear membrane attachment sites for cytoskeletal filaments. Required for the maintenance and/or formation of polarized nuclear shape in root hairs. Modulates the anchoring and mobility of WIP proteins in the nuclear envelope (NE). In association with SUN1, may be involved in telomere attachment to nuclear envelope in the prophase of meiosis. As component of the SUN-WIP-WIT2-KAKU1 complex, mediates the transfer of cytoplasmic forces to the nuclear envelope (NE), leading to nuclear shape changes. The sequence is that of SUN domain-containing protein 2 from Arabidopsis thaliana (Mouse-ear cress).